The primary structure comprises 704 residues: Probable serine/threonine-protein kinase WNK1 (704 aa).

One can recognise a Protein kinase domain in the interval 27-284 (GRYNDVLGKG…ARELLKDPFL (258 aa)). ATP-binding positions include 107 to 110 (TEMF) and lysine 157. Aspartate 174 functions as the Proton acceptor in the catalytic mechanism. The tract at residues 499–521 (QTDLQDSGGSSDDGGGQTQHVKD) is disordered.

Belongs to the protein kinase superfamily. Ser/Thr protein kinase family. WNK subfamily.

The enzyme catalyses L-seryl-[protein] + ATP = O-phospho-L-seryl-[protein] + ADP + H(+). It catalyses the reaction L-threonyl-[protein] + ATP = O-phospho-L-threonyl-[protein] + ADP + H(+). In Oryza sativa subsp. japonica (Rice), this protein is Probable serine/threonine-protein kinase WNK1 (WNK1).